A 567-amino-acid polypeptide reads, in one-letter code: TGF-beta receptor type-2 (567 aa).

An N-terminal signal peptide occupies residues 1 to 23 (MGRGLLRGLWPLHIVLWTRIAST). Residues 24-166 (IPPHVPKSVN…SPDLLLVIIQ (143 aa)) are Extracellular-facing. Disulfide bonds link Cys-51–Cys-84, Cys-54–Cys-71, Cys-61–Cys-67, Cys-77–Cys-101, Cys-121–Cys-136, and Cys-138–Cys-143. Asn-70 and Asn-94 each carry an N-linked (GlcNAc...) asparagine glycan. The helical transmembrane segment at 167 to 187 (VTGVSLLPPLGIAIAVIAIFY) threads the bilayer. At 188-567 (CYRVHRQQKL…PEDGSLNTTK (380 aa)) the chain is on the cytoplasmic side. One can recognise a Protein kinase domain in the interval 244–546 (IELDTLVGKG…RFSELEHPDR (303 aa)). ATP is bound by residues 250-258 (VGKGRFAEV) and Lys-277. Asp-379 serves as the catalytic Proton acceptor. Phosphoserine is present on residues Ser-409, Ser-548, and Ser-553. A disordered region spans residues 546–567 (RLSGRSCSQEKIPEDGSLNTTK).

Belongs to the protein kinase superfamily. TKL Ser/Thr protein kinase family. TGFB receptor subfamily. In terms of assembly, homodimer. Heterohexamer; TGFB1, TGFB2 and TGFB3 homodimeric ligands assemble a functional receptor composed of two TGFBR1 and TGFBR2 heterodimers to form a ligand-receptor heterohexamer. The respective affinity of TGFRB1 and TGFRB2 for the ligands may modulate the kinetics of assembly of the receptor and may explain the different biological activities of TGFB1, TGFB2 and TGFB3. Component of a complex composed of TSC22D1 (via N-terminus), TGFBR1 and TGFBR2; the interaction between TSC22D1 and TGFBR1 is inhibited by SMAD7 and promoted by TGFB1. Interacts with DAXX. Interacts with DYNLT4. Interacts with ZFYVE9; ZFYVE9 recruits SMAD2 and SMAD3 to the TGF-beta receptor. Interacts with and is activated by SCUBE3; this interaction does not affect TGFB1-binding to TGFBR2. Interacts with VPS39; this interaction is independent of the receptor kinase activity and of the presence of TGF-beta. Interacts with CLU. It depends on Mg(2+) as a cofactor. Mn(2+) serves as cofactor. Phosphorylated on a Ser/Thr residue in the cytoplasmic domain.

It localises to the cell membrane. It is found in the membrane raft. It carries out the reaction L-threonyl-[receptor-protein] + ATP = O-phospho-L-threonyl-[receptor-protein] + ADP + H(+). The enzyme catalyses L-seryl-[receptor-protein] + ATP = O-phospho-L-seryl-[receptor-protein] + ADP + H(+). Transmembrane serine/threonine kinase forming with the TGF-beta type I serine/threonine kinase receptor, TGFBR1, the non-promiscuous receptor for the TGF-beta cytokines TGFB1, TGFB2 and TGFB3. Transduces the TGFB1, TGFB2 and TGFB3 signal from the cell surface to the cytoplasm and is thus regulating a plethora of physiological and pathological processes including cell cycle arrest in epithelial and hematopoietic cells, control of mesenchymal cell proliferation and differentiation, wound healing, extracellular matrix production, immunosuppression and carcinogenesis. The formation of the receptor complex composed of 2 TGFBR1 and 2 TGFBR2 molecules symmetrically bound to the cytokine dimer results in the phosphorylation and the activation of TGFRB1 by the constitutively active TGFBR2. Activated TGFBR1 phosphorylates SMAD2 which dissociates from the receptor and interacts with SMAD4. The SMAD2-SMAD4 complex is subsequently translocated to the nucleus where it modulates the transcription of the TGF-beta-regulated genes. This constitutes the canonical SMAD-dependent TGF-beta signaling cascade. Also involved in non-canonical, SMAD-independent TGF-beta signaling pathways. The sequence is that of TGF-beta receptor type-2 (Tgfbr2) from Rattus norvegicus (Rat).